The following is a 763-amino-acid chain: MAVFKSWNLALLSSLFIPALCQSNYPDCTTGPLSELPICDTSLSPLERAKSLVSALTLEEKINNTGHEAAGSSRLGLPAYNWWNEALHGVAEKHGVSFEESGDFSYATSFPAPIVLGAAFNDALIRRVAEIISTEARAFSNSDHAGIDYWTPNVNPFKDPRWGRGQETPGEDPLHCSRYVKEFVGGLQGDDPEKPKVVATCKHLAAYDLEEWGGVSRFEFDAKVSAVDLLEYYLPPFKTCAVDASVGAFMCSYNALNGVPACADRYLLQTVLREHWGWEGPGHWVTGDCGAVERIQTYHHYVESGPEAAAAALNAGVDLDCGTWLPSYLGEAERQGLISNETLDAALTRLYTSLVQLGYFDPAEGQPLRSLGWDDVATSEAEELAKTVAIQGTVLLKNIDWTLPLKANGTLALIGPFINFTTELQSNYAGPAKHIPTMIEAAERLGYNVLTAPGTEVNSTSTDGFDDALAIAAEADALIFFGGIDNTVEEESLDRTRIDWPGNQEELILELAELGRPLTVVQFGGGQVDDSALLASAGVGAIVWAGYPSQAGGAGVFDVLTGKAAPAGRLPITQYPKSYVDEVPMTDMNLQPGTDNPGRTYRWYEDAVLPFGFGLHYTTFNVSWAKKAFGPYDAATLARGKNPSSNIVDTFSLAVTNTGDVASDYVALVFASAPELGAQPAPIKTLVGYSRASLIKPGETRKVDVEVTVAPLTRATEDGRVVLYPGEYTLLVDVNDEYPTAKFEIKGDVQVLEKFPLSGNDSD.

The signal sequence occupies residues 1–23; that stretch reads MAVFKSWNLALLSSLFIPALCQS. Asparagine 63 is a glycosylation site (N-linked (GlcNAc...) asparagine). Aspartate 288 is an active-site residue. Asparagine 340, asparagine 408, asparagine 419, asparagine 458, asparagine 621, and asparagine 760 each carry an N-linked (GlcNAc...) asparagine glycan.

The protein belongs to the glycosyl hydrolase 3 family.

Its subcellular location is the secreted. It catalyses the reaction Hydrolysis of (1-&gt;4)-beta-D-xylans, to remove successive D-xylose residues from the non-reducing termini.. The protein operates within glycan degradation; xylan degradation. Functionally, xylan 1,4-beta-xylosidase involved in the hydrolysis of xylan, a major structural heterogeneous polysaccharide found in plant biomass representing the second most abundant polysaccharide in the biosphere, after cellulose. Active against rye arabinoxylan and xylohexaose, but not paranitrophenyl-beta-xyloside. This chain is Exo-1,4-beta-xylosidase bxlB (bxlB), found in Emericella nidulans (strain FGSC A4 / ATCC 38163 / CBS 112.46 / NRRL 194 / M139) (Aspergillus nidulans).